A 93-amino-acid chain; its full sequence is ATP-dependent Clp protease adapter protein ClpS (93 aa).

Belongs to the ClpS family. Binds to the N-terminal domain of the chaperone ClpA.

Functionally, involved in the modulation of the specificity of the ClpAP-mediated ATP-dependent protein degradation. In Gloeobacter violaceus (strain ATCC 29082 / PCC 7421), this protein is ATP-dependent Clp protease adapter protein ClpS.